Reading from the N-terminus, the 515-residue chain is G-protein coupled receptor 176 (515 aa).

The Extracellular portion of the chain corresponds to 1-41 (MGHNSSWVSPNTSHPRNTSGAEAGANLSAFGELSEAQLYRQ). 4 N-linked (GlcNAc...) asparagine glycosylation sites follow: asparagine 4, asparagine 11, asparagine 17, and asparagine 26. A helical membrane pass occupies residues 42 to 64 (FTTTVQVVIFIGSLLGNFMVLWS). At 65–77 (TCRTTVFKSVTNR) the chain is on the cytoplasmic side. A helical transmembrane segment spans residues 78 to 98 (FIKNLACSGICASVVCVPFDI). Over 99 to 108 (ILSSSPHCCW) the chain is Extracellular. Residues 109 to 129 (WIYTMLFCKVLKFLHKVFCSV) form a helical membrane-spanning segment. At 130–157 (TVLSFPAIALDRYYSVLYPLERKISDAK) the chain is on the cytoplasmic side. A helical transmembrane segment spans residues 158–177 (SRELVMYIWAHAVVASVPVF). At 178–204 (AVTNVADIYAMSTCTEVWSNSLGHLVY) the chain is on the extracellular side. A helical transmembrane segment spans residues 205–225 (VLIYNVTTVIVPVAVVFLFLI). Topologically, residues 226–264 (LIRRALSASQKKKVIIAALRTPQNTISIPYASQREAELH) are cytoplasmic. A helical transmembrane segment spans residues 265–285 (ATLLSMVTVFILCSVPYATLV). The Extracellular portion of the chain corresponds to 286–301 (VYQTVLNVPNTSVFLL). A helical transmembrane segment spans residues 302–322 (LTAIWLPKVSLLANPVLFLTV). The Cytoplasmic portion of the chain corresponds to 323-515 (NKSVRKCLVG…KVSIFPKVDS (193 aa)). Residues 407–435 (SCPEGEQEPPQLAPSVPPPGTVDSEPRVS) are disordered. A compositionally biased stretch (pro residues) spans 417–426 (QLAPSVPPPG).

Belongs to the G-protein coupled receptor 1 family. In terms of tissue distribution, expressed mainly in the brain, with prominent expression in the SCN (at protein level).

It is found in the cell membrane. In terms of biological role, orphan receptor involved in normal circadian rhythm behavior. Acts through the G-protein subclass G(z)-alpha and has an agonist-independent basal activity to repress cAMP production. The sequence is that of G-protein coupled receptor 176 (Gpr176) from Mus musculus (Mouse).